The following is a 794-amino-acid chain: cAMP and cAMP-inhibited cGMP 3',5'-cyclic phosphodiesterase 10A (794 aa).

3',5'-cyclic AMP contacts are provided by residues 296-297, 340-341, T374, Q393, and H525; these read RC and IA. The region spanning 452–769 is the PDEase domain; it reads TSEEWQGLMH…NQWEKVIRGE (318 aa). Catalysis depends on H525, which acts as the Proton donor. Position 525 (H525) interacts with 3',5'-cyclic GMP. Residues H529, H563, D564, and D674 each contribute to the a divalent metal cation site. Residue Q726 coordinates 3',5'-cyclic AMP. Residue Q726 coordinates 3',5'-cyclic GMP.

This sequence belongs to the cyclic nucleotide phosphodiesterase family. As to quaternary structure, homodimer. It depends on a divalent metal cation as a cofactor. In terms of tissue distribution, detected in striatum and testis (at protein level). Detected in whole brain, hippocampus, olfactory bulb, striatum neurons and testis.

It localises to the cytoplasm. The protein localises to the cytosol. The catalysed reaction is a nucleoside 3',5'-cyclic phosphate + H2O = a nucleoside 5'-phosphate + H(+). The enzyme catalyses 3',5'-cyclic AMP + H2O = AMP + H(+). It carries out the reaction 3',5'-cyclic GMP + H2O = GMP + H(+). The protein operates within purine metabolism; 3',5'-cyclic AMP degradation; AMP from 3',5'-cyclic AMP: step 1/1. It functions in the pathway purine metabolism; 3',5'-cyclic GMP degradation; GMP from 3',5'-cyclic GMP: step 1/1. With respect to regulation, inhibited by dipyridamole and moderately by IBMX, zaprinast and rolipram. Its function is as follows. Plays a role in signal transduction by regulating the intracellular concentration of cyclic nucleotides. Can hydrolyze both cAMP and cGMP, but has higher affinity for cAMP and is more efficient with cAMP as substrate. The chain is cAMP and cAMP-inhibited cGMP 3',5'-cyclic phosphodiesterase 10A (Pde10a) from Rattus norvegicus (Rat).